We begin with the raw amino-acid sequence, 1256 residues long: MPTLWSPSTQHHGSSSGSMSSPLRKSVRCAQMALSPCSSNIQPCDDRDSQGTAEWDSSSTSEDSDFEDSLRRNVRKRAAKRPPKAIPVAKHPKKQSHIVPGGNDKNKSVPPTSDLFDAVKAARSCAQSLVDEWLENYKQDENAGFLELVNFFIRACGCKSTVTPEMFKTMSNSEIIQHLTEEFNEDSGDYPLTAPGPSWKKFQGSFCEFVKTLVCQCQYSLLFDGFPMDDLISLLIGLSDSQVRAFRHTSTLAAMKLMTSLVKVALQLSLHKDNNQRQYEAERNKGPEQRAPERLESLLEKRKEFQENQEEIEGMMNAIFRGVFVHRYRDILPEIRAVCIEEIGCWMQSYSTSFLNDSYLKYIGWTLHDKHKEVRLKCVKALAGLYSNQELSSRMELFTNRFKDRMVSMVMDRESEVAVEAIRLLTLILKNMEGVLTSADCEKIYSIVYISNRAMASSAGEFVYWKIFHPECGAKAVSGRERRRSPQAQRTFIYLLLAFFMESEHHDHAAYLVDSLWDCAGSYLKDWESLTSLLLQKDQNLGDMQERMLIEILVSSARQAAEGHPPVGRITGKKSLTAKERKLQAYDKVKLAEHLIPLLPQLLAKFSADAENVAPLLRLLSYFDLNIYCTQRLEKHLELLLQQLQEVVVKHVEPEVLEAAAHALYLLCKPEFTFFSRVDFARSQLVDLLTDRFQQELDDLMQSSFLDEDEVYSLTATLKRLSAFYNAHDLTRWEISEPCSRLLRKAVDTGEVPHQVILPALTLVYFSILWTVTHISESTSQKQLMSLKKRMVAFCELCQSCLSDVDPEIQEQAFVLLSDLLLIFSPQMVVGGRDFLRPLVFFPEATLQSELASFLMDHVFLQPGELGNGQSQEDHVQIELLHQRRRLLAGFCKLLLYGVLELDAASDVFKHYNKFYEDYGDIIKETLTRARQIDRCQCSRILLLSLKQLYTELIQEQGPQDLTELPAFIEMRDLARRFALSFGPQQLHNRDLVVMLHKEGIKFSLSELPPAGSSREPPNIAFLELLSEFSPRLFHQDKQLLLSYLEKCLQRVSMAPSHPWGPVTTYCHSLHLVENTAEASSQGPPHSKKRCIEVPRRLQEEESSSQGESLQLNSGPTTPTLTSTAVKRRQSPRTVGKRQKGGPGPGPGPGPGPGPGPGPGPGPGPGPELICSQQLSGTQRLKMSSAPCFQIRCDPSGSGLGKQMTRLSLMEEDEEEELRLLDEEWQCGDKLLHSPSSPSEHGLDLLDTTELNMEDF.

A compositionally biased stretch (low complexity) spans 1 to 22 (MPTLWSPSTQHHGSSSGSMSSP). Residues 1–110 (MPTLWSPSTQ…GGNDKNKSVP (110 aa)) form a disordered region. A compositionally biased stretch (basic residues) spans 72-83 (RNVRKRAAKRPP). One can recognise an SCD domain in the interval 324–409 (FVHRYRDILP…NRFKDRMVSM (86 aa)). Disordered stretches follow at residues 1096-1169 (RRLQ…GPEL) and 1230-1256 (KLLH…MEDF). The span at 1113–1125 (NSGPTTPTLTSTA) shows a compositional bias: polar residues. Residues 1126-1140 (VKRRQSPRTVGKRQK) show a composition bias toward basic residues. Over residues 1144–1166 (GPGPGPGPGPGPGPGPGPGPGPG) the composition is skewed to pro residues. Residue Ser-1234 is modified to Phosphoserine.

This sequence belongs to the SCC3 family. Component of the meiosis-specific cohesin complex, which also contains the SMC1 (SMC1A or SMC1B) and SMC3 heterodimer. Such complex likely contains RAD21, or the meiosis-specific related protein REC8. Interacts with CCDC79/TERB1; recruiting cohesin to telomeres to develop structural rigidity. In terms of processing, phosphorylated. As to expression, testis specific.

The protein localises to the nucleus. The protein resides in the chromosome. Its function is as follows. Meiosis specific component of cohesin complex. The cohesin complex is required for the cohesion of sister chromatids after DNA replication. The cohesin complex apparently forms a large proteinaceous ring within which sister chromatids can be trapped. At anaphase, the complex is cleaved and dissociates from chromatin, allowing sister chromatids to segregate. The meiosis-specific cohesin complex probably replaces mitosis specific cohesin complex when it dissociates from chromatin during prophase I. In Rattus norvegicus (Rat), this protein is Cohesin subunit SA-3 (Stag3).